We begin with the raw amino-acid sequence, 143 residues long: Hemoglobin subunit alpha (143 aa).

In terms of domain architecture, Globin spans 3–143 (KLSGEDKANV…TMRLCISKYR (141 aa)). His60 provides a ligand contact to O2. Residue His89 coordinates heme b.

This sequence belongs to the globin family. In terms of assembly, heterotetramer of two alpha chains and two beta chains. Red blood cells.

Involved in oxygen transport from the lung to the various peripheral tissues. The polypeptide is Hemoglobin subunit alpha (HBA) (Ambystoma mexicanum (Axolotl)).